We begin with the raw amino-acid sequence, 298 residues long: Myoblast determination protein 1 homolog (298 aa).

Residues 53–73 (PEEHPHTRAPPREPTEEEHVR) are compositionally biased toward basic and acidic residues. The interval 53–77 (PEEHPHTRAPPREPTEEEHVRAPSG) is disordered. The bHLH domain occupies 100–151 (DRRKAATMRERRRLSKVNEAFETLKRCTSTNPNQRLPKVEILRNAIRYIESL). 2 disordered regions span residues 170–220 (SGES…GKSS) and 242–298 (CPIL…YQVL). 2 stretches are compositionally biased toward polar residues: residues 173–183 (SDASSPRSNCS) and 257–284 (CSPQ…LPQE).

As to quaternary structure, efficient DNA binding requires dimerization with another bHLH protein. Seems to form active heterodimers with ITF-2.

It is found in the nucleus. Its function is as follows. Acts as a transcriptional activator that promotes transcription of muscle-specific target genes and plays a role in muscle differentiation. Induces fibroblasts to differentiate into myoblasts. Interacts with and is inhibited by the twist protein. This interaction probably involves the basic domains of both proteins. The protein is Myoblast determination protein 1 homolog (MYOD1) of Gallus gallus (Chicken).